The chain runs to 227 residues: Mediator of RNA polymerase II transcription subunit 18 (227 aa).

This sequence belongs to the Mediator complex subunit 18 family. As to quaternary structure, component of the Mediator complex.

The protein localises to the nucleus. Functionally, component of the Mediator complex, a coactivator involved in the regulated transcription of nearly all RNA polymerase II-dependent genes. Mediator functions as a bridge to convey information from gene-specific regulatory proteins to the basal RNA polymerase II transcription machinery. Mediator is recruited to promoters by direct interactions with regulatory proteins and serves as a scaffold for the assembly of a functional preinitiation complex with RNA polymerase II and the general transcription factors. The polypeptide is Mediator of RNA polymerase II transcription subunit 18 (mdt-18) (Caenorhabditis briggsae).